A 117-amino-acid polypeptide reads, in one-letter code: Immunoglobulin lambda variable 1-47 (117 aa).

Residues 1–19 (MAGFPLLLTLLTHCAGSWA) form the signal peptide. Glutamine 20 carries the pyrrolidone carboxylic acid modification. The framework-1 stretch occupies residues 20–44 (QSVLTQPPSASGTPGQRVTISCSGS). An Ig-like domain is found at 20-117 (QSVLTQPPSA…CAAWDDSLSG (98 aa)). Cysteines 41 and 108 form a disulfide. The tract at residues 45-52 (SSNIGSNY) is complementarity-determining-1. The segment at 53-69 (VYWYQQLPGTAPKLLIY) is framework-2. Positions 70 to 72 (SNN) are complementarity-determining-2. The framework-3 stretch occupies residues 73–108 (QRPSGVPDRFSGSKSGTSASLAISGLRSEDEADYYC). A complementarity-determining-3 region spans residues 109 to 117 (AAWDDSLSG).

In terms of assembly, immunoglobulins are composed of two identical heavy chains and two identical light chains; disulfide-linked.

It localises to the secreted. It is found in the cell membrane. Functionally, v region of the variable domain of immunoglobulin light chains that participates in the antigen recognition. Immunoglobulins, also known as antibodies, are membrane-bound or secreted glycoproteins produced by B lymphocytes. In the recognition phase of humoral immunity, the membrane-bound immunoglobulins serve as receptors which, upon binding of a specific antigen, trigger the clonal expansion and differentiation of B lymphocytes into immunoglobulins-secreting plasma cells. Secreted immunoglobulins mediate the effector phase of humoral immunity, which results in the elimination of bound antigens. The antigen binding site is formed by the variable domain of one heavy chain, together with that of its associated light chain. Thus, each immunoglobulin has two antigen binding sites with remarkable affinity for a particular antigen. The variable domains are assembled by a process called V-(D)-J rearrangement and can then be subjected to somatic hypermutations which, after exposure to antigen and selection, allow affinity maturation for a particular antigen. The protein is Immunoglobulin lambda variable 1-47 of Homo sapiens (Human).